Reading from the N-terminus, the 492-residue chain is 2-succinylbenzoate--CoA ligase (492 aa).

Belongs to the ATP-dependent AMP-binding enzyme family. MenE subfamily.

It carries out the reaction 2-succinylbenzoate + ATP + CoA = 2-succinylbenzoyl-CoA + AMP + diphosphate. It participates in quinol/quinone metabolism; 1,4-dihydroxy-2-naphthoate biosynthesis; 1,4-dihydroxy-2-naphthoate from chorismate: step 5/7. Its pathway is quinol/quinone metabolism; menaquinone biosynthesis. Converts 2-succinylbenzoate (OSB) to 2-succinylbenzoyl-CoA (OSB-CoA). This chain is 2-succinylbenzoate--CoA ligase, found in Staphylococcus aureus (strain MSSA476).